A 92-amino-acid polypeptide reads, in one-letter code: Islet amyloid polypeptide (92 aa).

An N-terminal signal peptide occupies residues 1-22 (MHISKLPAALLIFSVALNHLKA). The propeptide occupies 23–34 (TPVRSGTNHQMD). A disulfide bridge links Cys38 with Cys43. A Tyrosine amide modification is found at Tyr73. The propeptide occupies 77 to 92 (SAAEIPDGDSLDLFLL).

Belongs to the calcitonin family. In terms of assembly, can form homodimers. Interacts with IDE and INS. Interaction with INS inhibits homodimerization and fibril formation.

It is found in the secreted. In terms of biological role, amylin/IAPP is a glucoregulatory peptide hormone that plays an important role in the regulation of energy homeostasis. Selectively inhibits insulin-stimulated glucose utilization and glycogen deposition in muscle, while not affecting adipocyte glucose metabolism. IAPP function is mediated by the CALCR-RAMPs (AMYRs) receptor complexes. Amylin can also bind CALCR receptor in the absence of RAMPs, although it is more selective for AMYRs. The sequence is that of Islet amyloid polypeptide (IAPP) from Mesocricetus auratus (Golden hamster).